Reading from the N-terminus, the 812-residue chain is Lon protease (812 aa).

Residues 22 to 215 (YAVLPLRDIV…KALSFMEAEI (194 aa)) enclose the Lon N-terminal domain. Residue 367–374 (GPPGVGKT) coordinates ATP. The region spanning 602-783 (EDQVGVVTGL…GEVLKHALVR (182 aa)) is the Lon proteolytic domain. Residues serine 689 and lysine 732 contribute to the active site. The segment at 787 to 812 (PIEWTEQENPTAVPPVEDEAGASLAH) is disordered.

This sequence belongs to the peptidase S16 family. In terms of assembly, homohexamer. Organized in a ring with a central cavity.

The protein localises to the cytoplasm. It carries out the reaction Hydrolysis of proteins in presence of ATP.. ATP-dependent serine protease that mediates the selective degradation of mutant and abnormal proteins as well as certain short-lived regulatory proteins. Required for cellular homeostasis and for survival from DNA damage and developmental changes induced by stress. Degrades polypeptides processively to yield small peptide fragments that are 5 to 10 amino acids long. Binds to DNA in a double-stranded, site-specific manner. Required for wild-type virulence during the initial stages of infection in the mouse model, but not essential for the establishment and maintenance of chronic infection in this host. This Brucella abortus (strain 2308) protein is Lon protease.